The following is a 274-amino-acid chain: Nitrogenase iron protein (274 aa).

Position 8-15 (8-15 (GKGGIGKS)) interacts with ATP. Residue C94 participates in [4Fe-4S] cluster binding. Position 97 is an ADP-ribosylarginine; by dinitrogenase reductase ADP-ribosyltransferase (R97). A [4Fe-4S] cluster-binding site is contributed by C131.

Belongs to the NifH/BchL/ChlL family. Homodimer. The cofactor is [4Fe-4S] cluster. Post-translationally, the reversible ADP-ribosylation of Arg-97 inactivates the nitrogenase reductase and regulates nitrogenase activity.

It carries out the reaction N2 + 8 reduced [2Fe-2S]-[ferredoxin] + 16 ATP + 16 H2O = H2 + 8 oxidized [2Fe-2S]-[ferredoxin] + 2 NH4(+) + 16 ADP + 16 phosphate + 6 H(+). Its function is as follows. The key enzymatic reactions in nitrogen fixation are catalyzed by the nitrogenase complex, which has 2 components: the iron protein and the molybdenum-iron protein. The chain is Nitrogenase iron protein from Chlorobaculum parvum (strain DSM 263 / NCIMB 8327) (Chlorobium vibrioforme subsp. thiosulfatophilum).